A 421-amino-acid polypeptide reads, in one-letter code: Protein MID1-COMPLEMENTING ACTIVITY 1 (421 aa).

The stretch at 188 to 218 (RFCEALKTENEKLQIELQRSQEHYDVAQCEV) forms a coiled coil. A disordered region spans residues 233–288 (EPDSEKELTKKASKKSERSSSMKTEYSYDEDSPKKSSTRAASRSTSNVSSGHDLLS). Basic and acidic residues predominate over residues 235-252 (DSEKELTKKASKKSERSS). Positions 270–282 (TRAASRSTSNVSS) are enriched in low complexity. A helical transmembrane segment spans residues 346–362 (LMAYSLILSCCCYTCCV).

As to expression, expressed in roots, leaves, stems, flowers and siliques. Expressed in vascular tissues of cotyledons, leaves and primary root, in the promeristem and adjacent elongation zone of the primary root and in the shoot apical meristem. Detected in the stele and endodermis, but not in the cortex, epidermis or root cap, including the columella. Not expressed in root hairs or in mesophyll cells of leaves and cotyledons.

Its subcellular location is the cell membrane. Its activity is regulated as follows. Inhibited by GdCl(3), but not by verapamil. Calcium-permeable stretch-activated channel component. Involved in mechano-stimulated calcium uptake mechanism and in mechanosensing in the primary root. The chain is Protein MID1-COMPLEMENTING ACTIVITY 1 (MCA1) from Arabidopsis thaliana (Mouse-ear cress).